The following is a 518-amino-acid chain: Serine--tRNA ligase, mitochondrial (518 aa).

Residues 1 to 34 (MAASMARLWWPFLARQGLRSRGRCVCSQNPRRSF) constitute a mitochondrion transit peptide. K110 is modified (N6-acetyllysine). The residue at position 195 (K195) is an N6-succinyllysine. An L-serine-binding site is contributed by 299–301 (TAE). 330 to 332 (RAE) contributes to the ATP binding site. K337 bears the N6-succinyllysine mark. Residue V345 participates in ATP binding. An L-serine-binding site is contributed by E352. An ATP-binding site is contributed by 418-421 (EVTS). Residue T453 coordinates L-serine. The disordered stretch occupies residues 497-518 (PLQYIGPNQPQKPRLPGQSATR).

Belongs to the class-II aminoacyl-tRNA synthetase family. Type-1 seryl-tRNA synthetase subfamily. As to quaternary structure, homodimer. The tRNA molecule probably binds across the dimer. Ubiquitous.

The protein localises to the mitochondrion matrix. It carries out the reaction tRNA(Ser) + L-serine + ATP = L-seryl-tRNA(Ser) + AMP + diphosphate + H(+). The catalysed reaction is tRNA(Sec) + L-serine + ATP = L-seryl-tRNA(Sec) + AMP + diphosphate + H(+). The protein operates within aminoacyl-tRNA biosynthesis; selenocysteinyl-tRNA(Sec) biosynthesis; L-seryl-tRNA(Sec) from L-serine and tRNA(Sec): step 1/1. Functionally, catalyzes the attachment of serine to tRNA(Ser). Is also probably able to aminoacylate tRNA(Sec) with serine, to form the misacylated tRNA L-seryl-tRNA(Sec), which will be further converted into selenocysteinyl-tRNA(Sec). The protein is Serine--tRNA ligase, mitochondrial (Sars2) of Mus musculus (Mouse).